The following is a 225-amino-acid chain: Peroxiredoxin-2E-2, chloroplastic (225 aa).

Residues methionine 1 to arginine 42 constitute a chloroplast transit peptide. A Thioredoxin domain is found at isoleucine 63 to leucine 225. The active-site Cysteine sulfenic acid (-SOH) intermediate is cysteine 111.

Belongs to the peroxiredoxin family. Prx5 subfamily. In terms of assembly, monomer.

Its subcellular location is the plastid. It is found in the chloroplast stroma. It catalyses the reaction [glutaredoxin]-dithiol + a hydroperoxide = [glutaredoxin]-disulfide + an alcohol + H2O. Functionally, thiol-specific peroxidase that catalyzes the reduction of hydrogen peroxide and organic hydroperoxides to water and alcohols, respectively. Plays a role in cell protection against oxidative stress by detoxifying peroxides. May be involved in chloroplast redox homeostasis. The polypeptide is Peroxiredoxin-2E-2, chloroplastic (PRXIIE-2) (Oryza sativa subsp. japonica (Rice)).